A 294-amino-acid chain; its full sequence is Non-selective voltage-gated ion channel VDAC2 (294 aa).

Ala2 carries the post-translational modification N-acetylalanine. Residues Lys23 and Lys31 each contribute to the ATP site. The residue at position 31 (Lys31) is an N6-acetyllysine; alternate. An N6-succinyllysine; alternate modification is found at Lys31. Lys31 is covalently cross-linked (Glycyl lysine isopeptide (Lys-Gly) (interchain with G-Cter in ubiquitin); alternate). Beta stranded transmembrane passes span 37-46 and 50-58; these read LVKLDVKTKS and VEFSTSGSS. Glycyl lysine isopeptide (Lys-Gly) (interchain with G-Cter in ubiquitin) cross-links involve residues Lys64 and Lys72. A beta stranded transmembrane segment spans residues 65–75; that stretch reads VTGTLETKYKW. Position 78 is a phosphotyrosine (Tyr78). A run of 3 beta stranded transmembrane segments spans residues 80–87, 91–100, and 106–115; these read LTFTEKWN, TLGTEIAIED, and LKLTFDTTFS. At Thr118 the chain carries Phosphothreonine. Lys120 is subject to N6-acetyllysine; alternate. Residue Lys120 forms a Glycyl lysine isopeptide (Lys-Gly) (interchain with G-Cter in ubiquitin); alternate linkage. Glycyl lysine isopeptide (Lys-Gly) (interchain with G-Cter in ubiquitin) cross-links involve residues Lys121 and Lys124. The next 4 membrane-spanning stretches (beta stranded) occupy residues 122–131, 134–141, 148–156, and 161–169; these read SGKIKSSYKR, INLGCDVD, AIHGSAVFG, and LAGYQMTFD. Residue Lys172 forms a Glycyl lysine isopeptide (Lys-Gly) (interchain with G-Cter in ubiquitin) linkage. Transmembrane regions (beta stranded) follow at residues 174 to 186, 189 to 196, 200 to 209, 213 to 222, 229 to 238, and 242 to 249; these read KLTR…GYRT, FQLHTNVN, EFGGSIYQKV, LDTSVNLAWT, RFGIAAKYQL, and ASISAKVN. Ser251 is subject to Phosphoserine. Residues 253–255 and 271–275 each bind NAD(+); these read LIG and SALVD. Transmembrane regions (beta stranded) follow at residues 253–262 and 265–274; these read LIGVGYTQTL and GVKLTLSALV. Lys277 carries the N6-acetyllysine; alternate modification. Lys277 participates in a covalent cross-link: Glycyl lysine isopeptide (Lys-Gly) (interchain with G-Cter in ubiquitin); alternate. Residues 284–293 form a beta stranded membrane-spanning segment; it reads HKVGLALELE. Lys285 is covalently cross-linked (Glycyl lysine isopeptide (Lys-Gly) (interchain with G-Cter in ubiquitin)).

It belongs to the eukaryotic mitochondrial porin family. As to quaternary structure, monomer, homodimer and higher order oligomers; formation of higher order structures is necessary for scramblase activity. Interacts with ARMC12 in a TBC1D21-dependent manner. Interacts with KLC3. Interacts with SPATA33. Interacts with PPP3CC in a SPATA33-dependent manner. In terms of processing, ubiquitinated by PRKN during mitophagy, leading to its degradation and enhancement of mitophagy. Deubiquitinated by USP30. As to expression, expressed in erythrocytes (at protein level). Expressed in all tissues examined.

The protein resides in the mitochondrion outer membrane. The protein localises to the membrane. The catalysed reaction is chloride(in) = chloride(out). It carries out the reaction K(+)(in) = K(+)(out). The enzyme catalyses a 1,2-diacyl-sn-glycero-3-phospho-L-serine(in) = a 1,2-diacyl-sn-glycero-3-phospho-L-serine(out). It catalyses the reaction a 1,2-diacyl-sn-glycero-3-phosphocholine(in) = a 1,2-diacyl-sn-glycero-3-phosphocholine(out). The catalysed reaction is a 1,2-diacyl-sn-glycero-3-phospho-(1D-myo-inositol)(in) = a 1,2-diacyl-sn-glycero-3-phospho-(1D-myo-inositol)(out). In terms of biological role, non-selective voltage-gated ion channel that mediates the transport of anions and cations through the mitochondrion outer membrane and plasma membrane. The channel adopts an open conformation at zero mV and a closed conformation at both positive and negative potentials. There are two populations of channels; the main that functions in a lower open-state conductance with lower ion selectivity, that switch, in a voltage-dependent manner, from the open to a low-conducting 'closed' state and the other that has a normal ion selectivity in the typical high conductance, 'open' state. Binds various lipids, including the sphingolipid ceramide, the phospholipid phosphatidylcholine, and the sterols cholesterol and oxysterol. Binding of ceramide promotes the mitochondrial outer membrane permeabilization (MOMP) apoptotic pathway. Functionally, catalyzes the scrambling of phospholipids across the outer mitochondrial membrane; the mechanism is unrelated to channel activity and is capable of translocating both anionic and zwitterionic phospholipids. The protein is Non-selective voltage-gated ion channel VDAC2 of Homo sapiens (Human).